The following is a 210-amino-acid chain: MIPAEQIATDLLTIGAVTLAPNHPFLWASGMQAPIYTDNRRTIAFPQVRTHIADGLASLIKHRYPTATVISGVATAGITHAALVADRLNLPMSYVRAKPKDHGKGKQIEGQMTASDQVVLIDDLISTGGSVLAAAKAVRKAGATVLGVVAIFSYELPDSVVNFQQAGLALTPLTTYSTLITVAQQQAKITAPEMASLRQWREDPWGWVSV.

Residues arginine 96, lysine 100, histidine 102, and 122–130 each bind 5-phospho-alpha-D-ribose 1-diphosphate; that span reads DDLISTGGS. Serine 126 serves as a coordination point for orotate.

It belongs to the purine/pyrimidine phosphoribosyltransferase family. PyrE subfamily. In terms of assembly, homodimer. Mg(2+) is required as a cofactor.

It catalyses the reaction orotidine 5'-phosphate + diphosphate = orotate + 5-phospho-alpha-D-ribose 1-diphosphate. Its pathway is pyrimidine metabolism; UMP biosynthesis via de novo pathway; UMP from orotate: step 1/2. In terms of biological role, catalyzes the transfer of a ribosyl phosphate group from 5-phosphoribose 1-diphosphate to orotate, leading to the formation of orotidine monophosphate (OMP). The chain is Orotate phosphoribosyltransferase from Levilactobacillus brevis (strain ATCC 367 / BCRC 12310 / CIP 105137 / JCM 1170 / LMG 11437 / NCIMB 947 / NCTC 947) (Lactobacillus brevis).